A 480-amino-acid polypeptide reads, in one-letter code: Sestrin-2 (480 aa).

At methionine 1 the chain carries N-acetylmethionine. The tract at residues 20–45 (PGGVGDSGPGEEQRESRARRGPRGPS) is disordered. The interval 66–239 (GLEALMSSGR…APTPPSEQSS (174 aa)) is N-terminal domain; mediates the alkylhydroperoxide reductase activity. Cysteine 125 (cysteine sulfenic acid (-SOH) intermediate) is an active-site residue. Residue lysine 175 forms a Glycyl lysine isopeptide (Lys-Gly) (interchain with G-Cter in ubiquitin) linkage. The segment at 222–252 (ADGSPAPQAPTPPSEQSSPPSRDPLNNSGGF) is disordered. Position 249 is a phosphoserine (serine 249). Positions 308–480 (PHPDMLCFVE…ALRAITRYMT (173 aa)) are C-terminal domain; mediates TORC1 regulation. L-leucine contacts are provided by residues 374 to 377 (TYNT), threonine 386, and glutamate 451.

The protein belongs to the sestrin family. As to quaternary structure, interacts with the GATOR2 complex which is composed of MIOS, SEC13, SEH1L, WDR24 and WDR59; the interaction is negatively regulated by leucine. Conveys leucine availability via direct interaction with SEH1L and WDR24 components of the GATOR2 complex. Interacts with RRAGA, RRAGB, RRAGC and RRAGD; may function as a guanine nucleotide dissociation inhibitor for RRAGs and regulate them. May interact with the TORC2 complex. Interacts with KEAP1, RBX1, SQSTM and ULK1; to regulate the degradation of KEAP1. May also associate with the complex composed of TSC1, TSC2 and the AMP-responsive protein kinase/AMPK to regulate TORC1 signaling. May interact with PRDX1. Post-translationally, phosphorylated by ULK1 at multiple sites. In terms of processing, ubiquitinated at Lys-175 by RNF167 via 'Lys-63'-linked polyubiquitination in response to leucine deprivation: ubiquitination promotes SESN2-interaction with the GATOR2 complex, leading to inhibit the TORC1 signaling pathway. Deubiquitinated at Lys-175 by STAMBPL1, promoting the TORC1 signaling pathway. Ubiquitinated by RNF186; ubiquitination mediates proteasomal degradation.

It is found in the cytoplasm. The catalysed reaction is a hydroperoxide + L-cysteinyl-[protein] = S-hydroxy-L-cysteinyl-[protein] + an alcohol. Functionally, functions as an intracellular leucine sensor that negatively regulates the mTORC1 signaling pathway through the GATOR complex. In absence of leucine, binds the GATOR subcomplex GATOR2 and prevents mTORC1 signaling. Binding of leucine to SESN2 disrupts its interaction with GATOR2 thereby activating the TORC1 signaling pathway. This stress-inducible metabolic regulator also plays a role in protection against oxidative and genotoxic stresses. May negatively regulate protein translation in response to endoplasmic reticulum stress, via mTORC1. May positively regulate the transcription by NFE2L2 of genes involved in the response to oxidative stress by facilitating the SQSTM1-mediated autophagic degradation of KEAP1. May also mediate TP53 inhibition of TORC1 signaling upon genotoxic stress. Moreover, may prevent the accumulation of reactive oxygen species (ROS) through the alkylhydroperoxide reductase activity born by the N-terminal domain of the protein. Was originally reported to contribute to oxidative stress resistance by reducing PRDX1. However, this could not be confirmed. This Pongo abelii (Sumatran orangutan) protein is Sestrin-2.